The following is a 292-amino-acid chain: MELLCCEGTRHAPRAGPDPRLLGDQRVLQSLLRLEERYVPRASYFQCVQREIKPHMRKMLAYWMLEVCEEQRCEEEVFPLAMNYLDRYLSCVPTRKAQLQLLGAVCMLLASKLRETTPLTIEKLCIYTDHAVSPRQLRDWEVLVLGKLKWDLAAVIAHDFLAFILHRLSLPRDRQALVKKHAQTFLALCATDYTFAMYPPSMIATGSIGAAVQGLGACSMSGDELTELLAGITGTEVDCLRACQEQIEAALRESLREASQTSSSPAPKAPRGSSSQGPSQTSTPTDVTAIHL.

Residues 27–152 (VLQSLLRLEE…LVLGKLKWDL (126 aa)) form the Cyclin N-terminal domain. The interval 254–292 (SLREASQTSSSPAPKAPRGSSSQGPSQTSTPTDVTAIHL) is disordered. Phosphoserine is present on residues serine 264 and serine 279. Low complexity predominate over residues 272 to 285 (GSSSQGPSQTSTPT). The residue at position 283 (threonine 283) is a Phosphothreonine.

It belongs to the cyclin family. Cyclin D subfamily. Interacts with the CDK4 and CDK6 protein kinases to form a serine/threonine kinase holoenzyme complex. The cyclin subunit imparts substrate specificity to the complex. Interacts with ATF5. Interacts with EIF3K. Component of the ternary complex cyclin D/CDK4/CDKN1B required for nuclear translocation and modulation of CDK4-mediated kinase activity. Can form similar complexes with either CDKN1A or CDKN2A. In terms of processing, phosphorylation at Thr-283 by MAP kinases is required for ubiquitination and degradation by the DCX(AMBRA1) complex. Ubiquitinated by the DCX(AMBRA1) complex during the transition from G1 to S cell phase, leading to its degradation: ubiquitination is dependent on Thr-283 phosphorylation. The DCX(AMBRA1) complex represents the major regulator of CCND3 stability during the G1/S transition. Polyubiquitinated by the SCF(FBXL2) complex, leading to proteasomal degradation.

The protein localises to the nucleus. The protein resides in the cytoplasm. In terms of biological role, regulatory component of the cyclin D3-CDK4 (DC) complex that phosphorylates and inhibits members of the retinoblastoma (RB) protein family including RB1 and regulates the cell-cycle during G(1)/S transition. Phosphorylation of RB1 allows dissociation of the transcription factor E2F from the RB/E2F complex and the subsequent transcription of E2F target genes which are responsible for the progression through the G(1) phase. Hypophosphorylates RB1 in early G(1) phase. Cyclin D-CDK4 complexes are major integrators of various mitogenenic and antimitogenic signals. Component of the ternary complex, cyclin D3/CDK4/CDKN1B, required for nuclear translocation and activity of the cyclin D-CDK4 complex. Shows transcriptional coactivator activity with ATF5 independently of CDK4. This is G1/S-specific cyclin-D3 from Homo sapiens (Human).